Consider the following 387-residue polypeptide: Solute carrier family 25 protein Shawn (387 aa).

Solcar repeat units follow at residues 37–156, 179–263, and 269–366; these read IRPL…FKAR, IPFL…LKSS, and PTFS…GKSF. The next 6 helical transmembrane spans lie at 43–63, 128–148, 179–199, 235–255, 275–295, and 337–357; these read VASA…LDVI, LWSG…IYFV, IPFL…VTCV, LWRG…IYWT, FAAG…FDVV, and AIFS…AIMI.

The protein belongs to the mitochondrial carrier (TC 2.A.29) family.

The protein localises to the mitochondrion inner membrane. In terms of biological role, mitochondrial transporter required for glutathione import into mitochondria. The chain is Solute carrier family 25 protein Shawn from Drosophila melanogaster (Fruit fly).